Consider the following 378-residue polypeptide: Chaperone protein DnaJ (378 aa).

The J domain maps to 5 to 70 (DYYEVLGLQK…EKRAMYDQYG (66 aa)). The CR-type zinc-finger motif lies at 135 to 213 (GVKKDIRIRT…CHGDGRVEKT (79 aa)). Residues C148, C151, C165, C168, C187, C190, C201, and C204 each contribute to the Zn(2+) site. CXXCXGXG motif repeat units follow at residues 148 to 155 (CDTCHGSG), 165 to 172 (CPHCHGSG), 187 to 194 (CPSCHGTG), and 201 to 208 (CKSCHGDG).

It belongs to the DnaJ family. In terms of assembly, homodimer. Zn(2+) is required as a cofactor.

The protein localises to the cytoplasm. Participates actively in the response to hyperosmotic and heat shock by preventing the aggregation of stress-denatured proteins and by disaggregating proteins, also in an autonomous, DnaK-independent fashion. Unfolded proteins bind initially to DnaJ; upon interaction with the DnaJ-bound protein, DnaK hydrolyzes its bound ATP, resulting in the formation of a stable complex. GrpE releases ADP from DnaK; ATP binding to DnaK triggers the release of the substrate protein, thus completing the reaction cycle. Several rounds of ATP-dependent interactions between DnaJ, DnaK and GrpE are required for fully efficient folding. Also involved, together with DnaK and GrpE, in the DNA replication of plasmids through activation of initiation proteins. The protein is Chaperone protein DnaJ of Glaesserella parasuis serovar 5 (strain SH0165) (Haemophilus parasuis).